We begin with the raw amino-acid sequence, 120 residues long: NAD(P)H-quinone oxidoreductase subunit 3 (120 aa).

3 helical membrane passes run 10–30 (LLVF…ASAL), 64–84 (MFAL…PWAV), and 89–109 (LGLL…VGLV).

It belongs to the complex I subunit 3 family. NDH-1 can be composed of about 15 different subunits; different subcomplexes with different compositions have been identified which probably have different functions.

Its subcellular location is the cellular thylakoid membrane. It carries out the reaction a plastoquinone + NADH + (n+1) H(+)(in) = a plastoquinol + NAD(+) + n H(+)(out). The enzyme catalyses a plastoquinone + NADPH + (n+1) H(+)(in) = a plastoquinol + NADP(+) + n H(+)(out). Functionally, NDH-1 shuttles electrons from an unknown electron donor, via FMN and iron-sulfur (Fe-S) centers, to quinones in the respiratory and/or the photosynthetic chain. The immediate electron acceptor for the enzyme in this species is believed to be plastoquinone. Couples the redox reaction to proton translocation, and thus conserves the redox energy in a proton gradient. Cyanobacterial NDH-1 also plays a role in inorganic carbon-concentration. The sequence is that of NAD(P)H-quinone oxidoreductase subunit 3 from Synechococcus sp. (strain JA-3-3Ab) (Cyanobacteria bacterium Yellowstone A-Prime).